The sequence spans 944 residues: UvrABC system protein A (944 aa).

The 242-residue stretch at methionine 1 to valine 242 folds into the ABC transporter 1 domain. An ATP-binding site is contributed by glycine 34–serine 41. The C4-type; degenerate zinc finger occupies cysteine 256–cysteine 283. 2 ABC transporter domains span residues glutamate 359–serine 597 and serine 610–tyrosine 935. ATP is bound at residue glycine 643–serine 650. The C4-type zinc finger occupies cysteine 744–cysteine 770.

Belongs to the ABC transporter superfamily. UvrA family. Forms a heterotetramer with UvrB during the search for lesions.

The protein resides in the cytoplasm. In terms of biological role, the UvrABC repair system catalyzes the recognition and processing of DNA lesions. UvrA is an ATPase and a DNA-binding protein. A damage recognition complex composed of 2 UvrA and 2 UvrB subunits scans DNA for abnormalities. When the presence of a lesion has been verified by UvrB, the UvrA molecules dissociate. This is UvrABC system protein A from Mycoplasmopsis pulmonis (strain UAB CTIP) (Mycoplasma pulmonis).